The sequence spans 283 residues: Pantothenate synthetase (283 aa).

30 to 37 is an ATP binding site; that stretch reads MGALHEGH. Catalysis depends on His-37, which acts as the Proton donor. Gln-61 lines the (R)-pantoate pocket. Gln-61 contributes to the beta-alanine binding site. 147-150 lines the ATP pocket; that stretch reads GEKD. Position 153 (Gln-153) interacts with (R)-pantoate. ATP-binding positions include Val-176 and 184–187; that span reads VSSR.

Belongs to the pantothenate synthetase family. In terms of assembly, homodimer.

It is found in the cytoplasm. The enzyme catalyses (R)-pantoate + beta-alanine + ATP = (R)-pantothenate + AMP + diphosphate + H(+). It functions in the pathway cofactor biosynthesis; (R)-pantothenate biosynthesis; (R)-pantothenate from (R)-pantoate and beta-alanine: step 1/1. Catalyzes the condensation of pantoate with beta-alanine in an ATP-dependent reaction via a pantoyl-adenylate intermediate. The protein is Pantothenate synthetase of Chlorobium luteolum (strain DSM 273 / BCRC 81028 / 2530) (Pelodictyon luteolum).